Here is a 429-residue protein sequence, read N- to C-terminus: MDRIRIVGGNRLNGTIPISGAKNAALPLMIAALLTEETLILDNVPRLADVAQLQRILGNHGVDIMSAGKRPGDHEYQGQTLHISAASVIDTTAPYELVSKMRASFWVIAPLLARMHEARVSLPGGCAIGTRPVDLLILALEKLGARIAIDGGYVIASAPAGLRGAEVAFPKVTVSGTHVALMAATLASGTTVITNAACEPEIVDVADCLNKMGARVSGAGTPRIVIEGVGRLGGARHTVLPDRIETGTYAMAVAMTGGEVLLRGARPELLQAALDVLTEAGAEITPNNEGIRVARNGAGINPVTVSTAPFPGFPTDLQAQLMALMTRARGTSHITETIFENRFMHVQELARLGARIHLDGETATIEGIETLRGAPVMATDLRASVSLVIAGLAGEGETMVNRVYHLDRGFEQLEKKLSACGASIERIRA.

Position 22–23 (22–23) interacts with phosphoenolpyruvate; the sequence is KN. Arginine 102 contributes to the UDP-N-acetyl-alpha-D-glucosamine binding site. Catalysis depends on cysteine 126, which acts as the Proton donor. Cysteine 126 is subject to 2-(S-cysteinyl)pyruvic acid O-phosphothioketal. UDP-N-acetyl-alpha-D-glucosamine-binding positions include 131–135, aspartate 316, and isoleucine 338; that span reads RPVDL.

This sequence belongs to the EPSP synthase family. MurA subfamily.

It localises to the cytoplasm. It catalyses the reaction phosphoenolpyruvate + UDP-N-acetyl-alpha-D-glucosamine = UDP-N-acetyl-3-O-(1-carboxyvinyl)-alpha-D-glucosamine + phosphate. Its pathway is cell wall biogenesis; peptidoglycan biosynthesis. Functionally, cell wall formation. Adds enolpyruvyl to UDP-N-acetylglucosamine. The chain is UDP-N-acetylglucosamine 1-carboxyvinyltransferase from Nitrobacter winogradskyi (strain ATCC 25391 / DSM 10237 / CIP 104748 / NCIMB 11846 / Nb-255).